The chain runs to 162 residues: UPF0114 protein PSPA7_5214 (162 aa).

3 consecutive transmembrane segments (helical) span residues 15 to 35 (LLAPIYMGLSLALLALTIKFF), 53 to 73 (LILVLLSLIDMALVGGLLVMV), and 136 to 156 (LMWYVIIHMTFVLSAFAMGYL).

It belongs to the UPF0114 family.

Its subcellular location is the cell membrane. This is UPF0114 protein PSPA7_5214 from Pseudomonas paraeruginosa (strain DSM 24068 / PA7) (Pseudomonas aeruginosa (strain PA7)).